The chain runs to 226 residues: MARLLQASCLLSLLLAGFLPQSRGQDKSKMDCHGGVSGTIYEYGALTIDGEEYTPFKQYIGKYVLFVNVASYUGLTGQYIELNALQEELAPFGLDLLGFPCNQFGKQEPGENSEILPSLKYVRPGGGFVPNFQLFEKGDVNGEKEQKFYTFLKNSCPPTSELLGTSDRLFWEPMKVHDIRWNFEKFLVGPDGIPVMRWHHRTTISNVKMDILSYMRRQAALGVKRK.

The first 24 residues, 1–24 (MARLLQASCLLSLLLAGFLPQSRG), serve as a signal peptide directing secretion. The active site involves Sec-73. Sec-73 is a non-standard amino acid (selenocysteine).

Belongs to the glutathione peroxidase family. As to quaternary structure, homotetramer. Secreted in plasma.

It localises to the secreted. It catalyses the reaction 2 glutathione + H2O2 = glutathione disulfide + 2 H2O. The enzyme catalyses tert-butyl hydroperoxide + 2 glutathione = tert-butanol + glutathione disulfide + H2O. Its function is as follows. Protects cells and enzymes from oxidative damage, by catalyzing the reduction of hydrogen peroxide, lipid peroxides and organic hydroperoxide, by glutathione. This is Glutathione peroxidase 3 from Sapajus apella (Brown-capped capuchin).